Here is a 3004-residue protein sequence, read N- to C-terminus: Guanylate cyclase beta (3004 aa).

Residues 1-66 (MKETDKIKSE…FSLYNFIRRL (66 aa)) are Cytoplasmic-facing. Residues 67 to 87 (ISLDAVIVYTLFMTVYIFSEI) form a helical membrane-spanning segment. Residues 88 to 94 (SQGITKK) lie on the Extracellular side of the membrane. Residues 95–115 (YLFVDTAISLFLNIGILVVIE) form a helical membrane-spanning segment. At 116 to 300 (SLFELKLLKD…TFCIKMNNVV (185 aa)) the chain is on the cytoplasmic side. The chain crosses the membrane as a helical span at residues 301-321 (YYLIFMYILFVLLSIIIKAIF). Over 322 to 334 (YRKGKLLENSNDT) the chain is Extracellular. An N-linked (GlcNAc...) asparagine glycan is attached at N332. The chain crosses the membrane as a helical span at residues 335–355 (FFTVLEDFIGLYILVLPVMLY). Residues 356–991 (SEKSLIYIIQ…GRLNRFSLCR (636 aa)) are Cytoplasmic-facing. A helical transmembrane segment spans residues 992–1012 (AFLWIIYLKVMIGSFYFFHNF). Residues 1013–1022 (DNFFSGSSIS) are Extracellular-facing. The helical transmembrane segment at 1023–1043 (SILYSQTAFAIFHYSLIVAFA) threads the bilayer. The Cytoplasmic portion of the chain corresponds to 1044-1072 (SYEIDIPYKFIRNFPYIYQLARRKYFLNN). The helical transmembrane segment at 1073–1093 (TIIFLNIVESIFSSFISYYIL) threads the bilayer. Residues 1094 to 1105 (RGNLFNLITHRK) are Extracellular-facing. Residues 1106-1126 (FTFHIFVLNFFLISEKILLFS) form a helical membrane-spanning segment. The Cytoplasmic portion of the chain corresponds to 1127–1130 (KTWH). Residues 1131-1151 (IFFFIMTIIIVSILFIYINIY) form a helical membrane-spanning segment. The Extracellular segment spans residues 1152–1171 (TLVDCLITGKCEFSLFDPED). A helical transmembrane segment spans residues 1172-1192 (SYFWISLLPILYINFIIDKFM). Topologically, residues 1193 to 1297 (KFVKNKIYPD…YEKRNKLKLR (105 aa)) are cytoplasmic. Residues 1298–1318 (IIILLLFIIFLITFTIQIIIS) traverse the membrane as a helical segment. The Extracellular segment spans residues 1319–1327 (KFIEKKLHS). Residues 1328-1348 (LSYLTVIYYIVAVLYLIKILI) form a helical membrane-spanning segment. Residues 1349–1353 (RNKTN) lie on the Cytoplasmic side of the membrane. Residues 1354–1374 (YTYFYIIGKLLLVIGYLLEIS) traverse the membrane as a helical segment. Residues 1375 to 1394 (ENSVNNIINMLVTYSFTVCY) lie on the Extracellular side of the membrane. Residues 1395 to 1415 (IFFISFKILEGLVMCIIILSI) form a helical membrane-spanning segment. The Cytoplasmic segment spans residues 1416 to 1457 (AIWVYYHKNNNLNAMCTDFCDNPYTSLDNLEYINISCICKQQ). A helical membrane pass occupies residues 1458–1478 (IFTFLICTLSFTLICLFMKYY). Over 1479–1500 (EIYYLKKKFLTRYKQKVNLGKQ) the chain is Extracellular. The helical transmembrane segment at 1501 to 1521 (IEILHTMLPSFLVEYLLVSDP) threads the bilayer. The Cytoplasmic portion of the chain corresponds to 1522–2563 (KADGIMVGKN…EIINIDLTKK (1042 aa)). One can recognise a Guanylate cyclase 1 domain in the interval 1541–1696 (SVIFCDIDDF…DTVNTASRMK (156 aa)). A compositionally biased stretch (polar residues) spans 2463–2476 (TMSNSKSGQTNITT). Residues 2463–2491 (TMSNSKSGQTNITTDNKKSQIKKNGDVNK) form a disordered region. Residues 2477–2488 (DNKKSQIKKNGD) are compositionally biased toward basic and acidic residues. A helical transmembrane segment spans residues 2564–2584 (LIIIFVISELILSLCNVIELS). Topologically, residues 2585–2594 (YYENKETPND) are extracellular. The helical transmembrane segment at 2595–2615 (FIVIIWLIRSIYLFTITFIWL) threads the bilayer. Residues 2616-2634 (LLKTKLKEYKDNSSKMMWT) are Cytoplasmic-facing. Residues 2635–2655 (TFILNIFLSSWGIIMIDLACI) traverse the membrane as a helical segment. Topologically, residues 2656–2667 (HYSNLVGNSRER) are extracellular. A helical membrane pass occupies residues 2668–2688 (SIFFMKDATELIISMQLIFVK). Residues 2689–2695 (NMLFKHK) lie on the Cytoplasmic side of the membrane. The helical transmembrane segment at 2696–2716 (FFFFVFFFVFLMYSFFKLFVI) threads the bilayer. The Extracellular portion of the chain corresponds to 2717-2722 (HVCELR). A helical membrane pass occupies residues 2723-2743 (ICCSILLILSINILYFWYSEY). The Cytoplasmic portion of the chain corresponds to 2744–3004 (LDRTQYIIKR…KLREQNKVKG (261 aa)). Residues 2793–2927 (AFLFADIVGF…LDVLIANHIE (135 aa)) form the Guanylate cyclase 2 domain. 3 residues coordinate Mg(2+): D2798, I2799, and D2842.

The protein in the N-terminal section; belongs to the cation transport ATPase (P-type) (TC 3.A.3) family. Type IV subfamily. In the C-terminal section; belongs to the adenylyl cyclase class-4/guanylyl cyclase family. The cofactor is Mg(2+). Mn(2+) serves as cofactor.

The protein localises to the membrane. It carries out the reaction GTP = 3',5'-cyclic GMP + diphosphate. Catalyzes the synthesis of the second messenger cGMP from GTP. Probably by regulating cGMP production, required for ookinete gliding motility, which is necessary for the ookinete to traverse the midgut epithelium of the mosquito. The chain is Guanylate cyclase beta from Plasmodium berghei (strain Anka).